A 644-amino-acid polypeptide reads, in one-letter code: Biosynthetic arginine decarboxylase (644 aa).

N6-(pyridoxal phosphate)lysine is present on lysine 100. 282–292 (CDVGGGLAIDY) lines the substrate pocket.

Belongs to the Orn/Lys/Arg decarboxylase class-II family. SpeA subfamily. It depends on Mg(2+) as a cofactor. The cofactor is pyridoxal 5'-phosphate.

The catalysed reaction is L-arginine + H(+) = agmatine + CO2. Its function is as follows. Catalyzes the biosynthesis of agmatine from arginine. The polypeptide is Biosynthetic arginine decarboxylase (Gloeobacter violaceus (strain ATCC 29082 / PCC 7421)).